We begin with the raw amino-acid sequence, 392 residues long: Multidrug resistance protein MdtL (392 aa).

12 consecutive transmembrane segments (helical) span residues phenylalanine 4–valine 24, alanine 38–alanine 58, proline 69–histidine 89, leucine 95–isoleucine 115, leucine 131–methionine 151, serine 158–leucine 178, leucine 209–leucine 229, alanine 246–phenylalanine 266, threonine 270–threonine 290, valine 294–methionine 314, valine 331–glycine 351, and methionine 357–threonine 377.

The protein belongs to the major facilitator superfamily. DHA1 family. MdtL (TC 2.A.1.2.22) subfamily.

Its subcellular location is the cell inner membrane. This Klebsiella pneumoniae subsp. pneumoniae (strain ATCC 700721 / MGH 78578) protein is Multidrug resistance protein MdtL.